The sequence spans 313 residues: tRNA dimethylallyltransferase (313 aa).

An ATP-binding site is contributed by 11 to 18 (GPTASGKT). 13–18 (TASGKT) serves as a coordination point for substrate. 3 interaction with substrate tRNA regions span residues 36–39 (DSAL), 160–164 (QRINR), and 241–246 (RCVGYR).

The protein belongs to the IPP transferase family. Monomer. The cofactor is Mg(2+).

The enzyme catalyses adenosine(37) in tRNA + dimethylallyl diphosphate = N(6)-dimethylallyladenosine(37) in tRNA + diphosphate. In terms of biological role, catalyzes the transfer of a dimethylallyl group onto the adenine at position 37 in tRNAs that read codons beginning with uridine, leading to the formation of N6-(dimethylallyl)adenosine (i(6)A). The chain is tRNA dimethylallyltransferase from Haemophilus ducreyi (strain 35000HP / ATCC 700724).